A 499-amino-acid chain; its full sequence is Probable cytosol aminopeptidase (499 aa).

K264 and D269 together coordinate Mn(2+). The active site involves K276. 3 residues coordinate Mn(2+): D287, D346, and E348. R350 is a catalytic residue.

The protein belongs to the peptidase M17 family. It depends on Mn(2+) as a cofactor.

The protein localises to the cytoplasm. It catalyses the reaction Release of an N-terminal amino acid, Xaa-|-Yaa-, in which Xaa is preferably Leu, but may be other amino acids including Pro although not Arg or Lys, and Yaa may be Pro. Amino acid amides and methyl esters are also readily hydrolyzed, but rates on arylamides are exceedingly low.. The enzyme catalyses Release of an N-terminal amino acid, preferentially leucine, but not glutamic or aspartic acids.. Its function is as follows. Presumably involved in the processing and regular turnover of intracellular proteins. Catalyzes the removal of unsubstituted N-terminal amino acids from various peptides. The chain is Probable cytosol aminopeptidase from Rhodopseudomonas palustris (strain BisB18).